We begin with the raw amino-acid sequence, 893 residues long: Zinc finger protein 281 (893 aa).

4 disordered regions span residues 1–113, 126–148, 153–172, and 198–251; these read MKIG…FPSQ, IKQE…HHHY, AGAE…SHGV, and SGSR…GAVL. A Glycyl lysine isopeptide (Lys-Gly) (interchain with G-Cter in SUMO2) cross-link involves residue K2. Positions 7 to 36 are enriched in gly residues; the sequence is FLSGGGGPSSSGGSGSGGSSGSASGGSGGG. Residues K100 and K127 each participate in a glycyl lysine isopeptide (Lys-Gly) (interchain with G-Cter in SUMO2) cross-link. Residues 127-139 show a composition bias toward basic and acidic residues; the sequence is KQEKPADPEEQPS. A compositionally biased stretch (gly residues) spans 161-170; that stretch reads GLGGGEGGSH. Residues 201–216 show a composition bias toward basic and acidic residues; that stretch reads RTDEHGNQEPKQDANV. Residues K211, K217, K223, K230, K240, and K256 each participate in a glycyl lysine isopeptide (Lys-Gly) (interchain with G-Cter in SUMO2) cross-link. 3 consecutive C2H2-type zinc fingers follow at residues 258–280, 286–308, and 314–336; these read HICD…VLIH, FQCS…EKIH, and FGCD…KRTH. Glycyl lysine isopeptide (Lys-Gly) (interchain with G-Cter in SUMO2) cross-links involve residues K298 and K322. The segment at 342-364 adopts a C2H2-type 4; atypical zinc-finger fold; it reads YKCDTCQQYFSRTDRLLKHRRTC. Residue K370 forms a Glycyl lysine isopeptide (Lys-Gly) (interchain with G-Cter in SUMO2) linkage. Residues 371 to 425 form a disordered region; that stretch reads GAASAEPGSSNHNSMGNLAVLSQGNTSSSRRKSKSKSIAIENKEHKTGKTNESQM. A compositionally biased stretch (polar residues) spans 377 to 396; it reads PGSSNHNSMGNLAVLSQGNT. S392 bears the Phosphoserine mark. Glycyl lysine isopeptide (Lys-Gly) (interchain with G-Cter in SUMO2) cross-links involve residues K406, K413, K457, and K474. S481 bears the Phosphoserine mark. Residues K490, K495, K536, K596, K614, and K619 each participate in a glycyl lysine isopeptide (Lys-Gly) (interchain with G-Cter in SUMO2) cross-link. The disordered stretch occupies residues 613 to 658; it reads GKSETQKEDPFNLTEPRVDLHTSGEHSELVQEENLSPGTQTPSNDK. Basic and acidic residues predominate over residues 616-641; sequence ETQKEDPFNLTEPRVDLHTSGEHSEL. A compositionally biased stretch (polar residues) spans 645–658; it reads ENLSPGTQTPSNDK. S648 is modified (phosphoserine). Glycyl lysine isopeptide (Lys-Gly) (interchain with G-Cter in SUMO2) cross-links involve residues K658 and K667. The segment covering 775–813 has biased composition (polar residues); that stretch reads SSAFQSSSQKLTSQKEQQKNLESSTSFQIPSQELASQID. The disordered stretch occupies residues 775 to 815; it reads SSAFQSSSQKLTSQKEQQKNLESSTSFQIPSQELASQIDPQ. Residue S782 is modified to Phosphoserine. Residues K784, K789, and K793 each participate in a glycyl lysine isopeptide (Lys-Gly) (interchain with G-Cter in SUMO2) cross-link. A Phosphoserine modification is found at S805. Glycyl lysine isopeptide (Lys-Gly) (interchain with G-Cter in SUMO2) cross-links involve residues K816 and K838. T886 is subject to Phosphothreonine.

This sequence belongs to the krueppel C2H2-type zinc-finger protein family. In terms of assembly, interacts with NANOG. Associates with the NuRD complex.

Its subcellular location is the nucleus. In terms of biological role, transcription repressor that plays a role in regulation of embryonic stem cells (ESCs) differentiation. Required for ESCs differentiation and acts by mediating autorepression of NANOG in ESCs: binds to the NANOG promoter and promotes association of NANOG protein to its own promoter and recruits the NuRD complex, which deacetylates histones. Not required for establishement and maintenance of ESCs. Represses the transcription of a number of genes including GAST, ODC1 and VIM. Binds to the G-rich box in the enhancer region of these genes. The protein is Zinc finger protein 281 (Znf281) of Mus musculus (Mouse).